Consider the following 900-residue polypeptide: uncharacterized protein (900 aa).

Residues 1-16 are compositionally biased toward basic and acidic residues; that stretch reads MGSNKEAKNIDSKNDR. 5 disordered regions span residues 1-84, 103-160, 512-556, 568-613, and 648-676; these read MGSN…KLSS, NSSR…PDPS, NFNQ…KKSG, LAST…KSAN, and KRSS…NSFP. Residues 17-27 are compositionally biased toward polar residues; sequence GLTSITSNKIS. Basic and acidic residues predominate over residues 30–58; it reads KAHDNHTSSMITEHKNADKEKGKQEKESR. Composition is skewed to low complexity over residues 63 to 76 and 103 to 127; these read QSSS…PQVS and NSSR…QLSK. Residue Ser105 is modified to Phosphoserine. The span at 129-143 shows a compositional bias: basic residues; sequence GLHHHHTSNNKHSHR. Residues 528–537 show a composition bias toward low complexity; it reads SSRSLSLPSS. Basic residues predominate over residues 543-553; sequence KRKKSPTKATK. Composition is skewed to low complexity over residues 570-601 and 665-676; these read STSH…SSPP and SPISSNSDNSFP.

This is an uncharacterized protein from Saccharomyces cerevisiae (strain ATCC 204508 / S288c) (Baker's yeast).